Reading from the N-terminus, the 248-residue chain is 14-3-3 protein (248 aa).

Coiled-coil stretches lie at residues 13-33 (MAQL…MRKI) and 91-111 (RQKI…LLQE). Position 135–136 (135–136 (RY)) interacts with O-phospho-L-serine. Phosphothreonine is present on Thr214. A Putative polyglycylation target motif (T/G)X0-1(D/E)X1-3-G(D/E)X1-2(gE)2-4, where X is polar or negatively charged amino acid, and gE is polyglycylated glutamine motif is present at residues 237-248 (TDSAGDDNAEEK). Glu246 is modified (5-glutamyl polyglycine).

The protein belongs to the 14-3-3 family. In terms of assembly, homodimer. Homodimerizes via N-terminal domains. Oligomerizes forming homotrimers, homotetramers and protein filaments. Oligomerization is hindered by polyglycylation in vivo. Interacts with a large number of both cytosolic and membrane proteins in trophozoites and encysting parasites. Interacts with a serine/threonine protein kinase GL50803_112076 (gCDC7). Component of a multiprotein complex containing gCDC7 and GL50803_94117 (gDBF4), a regulatory subunit of gCDC7, during both the trophozoite and encysting stages of the parasite. Interacts with fructose-bisphosphate aldolase GL50803_11043 (gFBA), pyruvate kinase GL50803_17143 (gPyk), acetyl-CoA synthetase GL50803_13608 (gACS), protein kinase GL50803_22165 (gSTE), DEAD box RNA helicase GL50803_34684 (gVASA) and Golgi/cell cycle associated protein GL50803_17472 (gGCCA). Interacts with actin. Interacts with both monomeric phosphorylated and unphosphorylated actin. The interaction is enhanced by phosphorylation of actin and inhibited by Rho GTPase Rac. Post-translationally, phosphorylated constitutively throughout the life cycle. Phosphorylation is very high in trophozoites and encysting cells of 12 hours. Phosphorylated during excystation. Phosphorylation promotes its binding to various target proteins and is critical for encystation process. Phosphorylation modification is not influenced by polyglycylation modification. In terms of processing, polyglycylated on a glutamate residue, resulting in polyglycine chain on the gamma-carboxyl group. Polyglycylated by the tubulin--tyrosine ligase-like protein GL50803_8456 (gTTLL3). The polyglycine chain is shortened by metallopeptidases of the M20 family, namely dipeptidases GL50803_15832 (gDIP1) and GL50803_8407 (gDIP2). The length of the polyglycine chain is developmental stage-dependent. In trophozoites, glycine residues range from 10 to 31, with the greatest occurrence of 21 residues. In 12 hour encystation stage, glycine residues range from 6 to 22, with the greatest occurrence of 10 residues. The differential rate of polyglycylation/deglycylation during the encystation process regulates the intracellular localization of this protein. Relocalizes partially from the cytoplasm inside the nuclei following the shortening of the polyglycine chain in encysting cells. Polyglycylation modification is not influenced by phosphorylation modification. Polyglycylation prevents oligomerization in vivo.

The protein resides in the cytoplasm. The protein localises to the cytoskeleton. It is found in the nucleus. It localises to the cell projection. Its subcellular location is the cilium. The protein resides in the flagellum. The protein localises to the spindle. It is found in the nucleus envelope. It localises to the endoplasmic reticulum. Its function is as follows. Adapter protein implicated in the regulation of a large spectrum of both general and specialized signaling pathways. Binds to a large number of partners, usually by recognition of a phosphoserine or phosphothreonine motif. Binding generally results in the modulation of the activity of the binding partner. Binds with varying affinity to various synthetic phosphopeptides having a consensus binding motif RSX(pS/pT)XP, called mode-1, where X is any residue and pS/pT is a phosphorylated serine/threonine, and to synthetic phosphopeptides having a consensus binding motif Xp(S/T)X1-2-COOH, called mode-3, in which the phosphorylated residue occupies the penultimate C-terminal position in the target protein, but does not bind to their unphosphorylated counterparts. Binds to synthetic human RAF1 phosphopeptides, but not to their unphosphorylated forms. Binds to difopein, a polypeptide containing a phosphorylation-independent binding motif. Involved in encystation. Involved in cell proliferation. Required for actin and tubulin cytoskeletal organization. Regulates actin filament formation and nuclear size. The protein is 14-3-3 protein of Giardia intestinalis (strain ATCC 50803 / WB clone C6) (Giardia lamblia).